The chain runs to 180 residues: Bifunctional protein PyrR 1 (180 aa).

Substrate is bound by residues 39–40 (TR), 103–111 (DDVLFTGRT), R136, and V160. Residues 99–111 (VILVDDVLFTGRT) carry the PRPP-binding motif.

It belongs to the purine/pyrimidine phosphoribosyltransferase family. PyrR subfamily. Homodimer and homohexamer; in equilibrium.

It carries out the reaction UMP + diphosphate = 5-phospho-alpha-D-ribose 1-diphosphate + uracil. In terms of biological role, regulates transcriptional attenuation of the pyrimidine nucleotide (pyr) operon by binding in a uridine-dependent manner to specific sites on pyr mRNA. This disrupts an antiterminator hairpin in the RNA and favors formation of a downstream transcription terminator, leading to a reduced expression of downstream genes. Functionally, also displays a weak uracil phosphoribosyltransferase activity which is not physiologically significant. In Lactiplantibacillus plantarum (strain ATCC BAA-793 / NCIMB 8826 / WCFS1) (Lactobacillus plantarum), this protein is Bifunctional protein PyrR 1 (pyrR1).